The chain runs to 113 residues: N-alpha-acetyltransferase 38-A, NatC auxiliary subunit (113 aa).

The disordered stretch occupies residues 1–29; sequence MAAVLEENGCSRQSSPSAGDSDAEPGDTA. The 79-residue stretch at 28–106 folds into the Sm domain; that stretch reads TARHKLESLL…IVSIQVELES (79 aa).

It belongs to the snRNP Sm proteins family. In terms of assembly, component of the N-terminal acetyltransferase C (NatC) complex, which is composed of naa35, naa38 and naa30.

It is found in the cytoplasm. Its function is as follows. Auxillary component of the N-terminal acetyltransferase C (NatC) complex which catalyzes acetylation of N-terminal methionine residues. This chain is N-alpha-acetyltransferase 38-A, NatC auxiliary subunit (naa38-a), found in Xenopus laevis (African clawed frog).